A 290-amino-acid chain; its full sequence is Acetyl-coenzyme A carboxylase carboxyl transferase subunit beta (290 aa).

The CoA carboxyltransferase N-terminal domain maps to 28–290 (IMTKCPKCKK…TGGDIEWLQD (263 aa)). Residues Cys32, Cys35, Cys51, and Cys54 each coordinate Zn(2+). The segment at 32–54 (CPKCKKIMLTKELDKNMRVCMNC) adopts a C4-type zinc-finger fold.

This sequence belongs to the AccD/PCCB family. In terms of assembly, acetyl-CoA carboxylase is a heterohexamer composed of biotin carboxyl carrier protein (AccB), biotin carboxylase (AccC) and two subunits each of ACCase subunit alpha (AccA) and ACCase subunit beta (AccD). The cofactor is Zn(2+).

It localises to the cytoplasm. It catalyses the reaction N(6)-carboxybiotinyl-L-lysyl-[protein] + acetyl-CoA = N(6)-biotinyl-L-lysyl-[protein] + malonyl-CoA. It functions in the pathway lipid metabolism; malonyl-CoA biosynthesis; malonyl-CoA from acetyl-CoA: step 1/1. With respect to regulation, inhibited by pyrrolidine dione antibiotics moiramide B (CPD1) and CPD2. In terms of biological role, component of the acetyl coenzyme A carboxylase (ACC) complex. Biotin carboxylase (BC) catalyzes the carboxylation of biotin on its carrier protein (BCCP) and then the CO(2) group is transferred by the transcarboxylase to acetyl-CoA to form malonyl-CoA. This Bacillus subtilis (strain 168) protein is Acetyl-coenzyme A carboxylase carboxyl transferase subunit beta.